The sequence spans 307 residues: MFRQRTIQNLVRTTGVGVHSGRRVELTLRPAQPNTGIVFHRVDLPQVVDLPAQATGVGDTRMASVLQQGNVRVSTVEHLMSALAGLGIDNLHVDLTAEEVPIMDGSAATFVYLLRSAGIVEQNAPKHFIRVLKPIEVREGEGRNEKWARLEPHEGFALAFSIDFRHPAIDSTANFAEIDFATHSYVREIARARTFGFVNEVEALRSMGLARGGSLDNAIVMDEFRVLNSDGLRYDDEFVKHKILDAIGDLYLLGKPLVARYVAQKSGHALNNQLARALLEQQDAWELVTYESQAEAPQAFRHEWKLA.

Zn(2+) contacts are provided by H78, H241, and D245. The active-site Proton donor is the H268.

The protein belongs to the LpxC family. Zn(2+) is required as a cofactor.

It carries out the reaction a UDP-3-O-[(3R)-3-hydroxyacyl]-N-acetyl-alpha-D-glucosamine + H2O = a UDP-3-O-[(3R)-3-hydroxyacyl]-alpha-D-glucosamine + acetate. It participates in glycolipid biosynthesis; lipid IV(A) biosynthesis; lipid IV(A) from (3R)-3-hydroxytetradecanoyl-[acyl-carrier-protein] and UDP-N-acetyl-alpha-D-glucosamine: step 2/6. In terms of biological role, catalyzes the hydrolysis of UDP-3-O-myristoyl-N-acetylglucosamine to form UDP-3-O-myristoylglucosamine and acetate, the committed step in lipid A biosynthesis. The protein is UDP-3-O-acyl-N-acetylglucosamine deacetylase of Bordetella avium (strain 197N).